We begin with the raw amino-acid sequence, 312 residues long: Zinc transporter ZitB (312 aa).

6 consecutive transmembrane segments (helical) span residues 16–36, 40–60, 81–101, 117–137, 153–173, and 177–197; these read LLIA…GGWL, LALL…FIAL, LTTL…ILIV, TPML…FWIL, LHVL…IVIL, and WTPI…RNAW.

This sequence belongs to the cation diffusion facilitator (CDF) transporter (TC 2.A.4) family. SLC30A subfamily.

It localises to the cell inner membrane. In terms of biological role, involved in zinc efflux across the cytoplasmic membrane, thus reducing zinc accumulation in the cytoplasm and rendering bacteria more resistant to zinc. It may contribute to zinc homeostasis at low concentrations of zinc. In Yersinia pseudotuberculosis serotype I (strain IP32953), this protein is Zinc transporter ZitB.